Here is a 362-residue protein sequence, read N- to C-terminus: 3-isopropylmalate dehydrogenase (362 aa).

Residue 75–88 (GPKWANLPPTEQPE) coordinates NAD(+). Arginine 96, arginine 106, arginine 135, and aspartate 224 together coordinate substrate. The Mg(2+) site is built by aspartate 224, aspartate 248, and aspartate 252. 282 to 294 (GSAPDIAGLGVAN) is a binding site for NAD(+).

It belongs to the isocitrate and isopropylmalate dehydrogenases family. LeuB type 1 subfamily. As to quaternary structure, homodimer. It depends on Mg(2+) as a cofactor. Mn(2+) is required as a cofactor.

It is found in the cytoplasm. It catalyses the reaction (2R,3S)-3-isopropylmalate + NAD(+) = 4-methyl-2-oxopentanoate + CO2 + NADH. Its pathway is amino-acid biosynthesis; L-leucine biosynthesis; L-leucine from 3-methyl-2-oxobutanoate: step 3/4. Its function is as follows. Catalyzes the oxidation of 3-carboxy-2-hydroxy-4-methylpentanoate (3-isopropylmalate) to 3-carboxy-4-methyl-2-oxopentanoate. The product decarboxylates to 4-methyl-2 oxopentanoate. The sequence is that of 3-isopropylmalate dehydrogenase from Colwellia psychrerythraea (strain 34H / ATCC BAA-681) (Vibrio psychroerythus).